The following is a 380-amino-acid chain: MAPNLRKSHPLLKLINNSLIDLPTPSNISAWWNFGSLLGICLLTQILTGLLLATHYTADTTLAFSSVAHTCRNVQYGWLIRNLHANGASFFFICIYLHIGRGFYYGSYLNKETWNTGIILLLALMATAFVGYVLPWGQMSFWGATVITNLFSAIPYIGQTLVEWAWGGFSVDNPTLTRFFALHFLLPFMIAGLAFIHLTFLHESGSNNPLGIPSNCDKIPFHPYFSLKDILGFIVMFLPLTTLALFSPNLLGDPENFTPANPLVTPPHIKPEWYFLFAYAILRSIPNKLGGVLALAASVLVLFLTPLLHKSKQRAMTFRPFSQFLFWTLVANLFILTWVGSQPVEHPFIIIGQLASLTYFTILLLLFPIIGALENKMLNY.

Helical transmembrane passes span 34–54 (FGSL…LLAT), 78–99 (WLIR…YLHI), 114–134 (WNTG…GYVL), and 179–199 (FFAL…IHLT). Residues His84 and His98 each contribute to the heme b site. Heme b-binding residues include His183 and His197. His202 lines the a ubiquinone pocket. The next 4 helical transmembrane spans lie at 227–247 (LKDI…ALFS), 289–309 (LGGV…PLLH), 321–341 (FSQF…WVGS), and 348–368 (FIII…LLFP).

This sequence belongs to the cytochrome b family. As to quaternary structure, the cytochrome bc1 complex contains 11 subunits: 3 respiratory subunits (MT-CYB, CYC1 and UQCRFS1), 2 core proteins (UQCRC1 and UQCRC2) and 6 low-molecular weight proteins (UQCRH/QCR6, UQCRB/QCR7, UQCRQ/QCR8, UQCR10/QCR9, UQCR11/QCR10 and a cleavage product of UQCRFS1). This cytochrome bc1 complex then forms a dimer. Heme b is required as a cofactor.

The protein resides in the mitochondrion inner membrane. Component of the ubiquinol-cytochrome c reductase complex (complex III or cytochrome b-c1 complex) that is part of the mitochondrial respiratory chain. The b-c1 complex mediates electron transfer from ubiquinol to cytochrome c. Contributes to the generation of a proton gradient across the mitochondrial membrane that is then used for ATP synthesis. In Alle alle (Dovekie), this protein is Cytochrome b (MT-CYB).